An 82-amino-acid polypeptide reads, in one-letter code: ATP synthase subunit c, chloroplastic (82 aa).

2 helical membrane-spanning segments follow: residues 3 to 23 (PLIA…AAIG) and 57 to 77 (FAFM…LLFA).

This sequence belongs to the ATPase C chain family. As to quaternary structure, F-type ATPases have 2 components, F(1) - the catalytic core - and F(0) - the membrane proton channel. F(1) has five subunits: alpha(3), beta(3), gamma(1), delta(1), epsilon(1). F(0) has four main subunits: a(1), b(1), b'(1) and c(10-14). The alpha and beta chains form an alternating ring which encloses part of the gamma chain. F(1) is attached to F(0) by a central stalk formed by the gamma and epsilon chains, while a peripheral stalk is formed by the delta, b and b' chains.

It is found in the plastid. It localises to the chloroplast thylakoid membrane. Functionally, f(1)F(0) ATP synthase produces ATP from ADP in the presence of a proton or sodium gradient. F-type ATPases consist of two structural domains, F(1) containing the extramembraneous catalytic core and F(0) containing the membrane proton channel, linked together by a central stalk and a peripheral stalk. During catalysis, ATP synthesis in the catalytic domain of F(1) is coupled via a rotary mechanism of the central stalk subunits to proton translocation. Key component of the F(0) channel; it plays a direct role in translocation across the membrane. A homomeric c-ring of between 10-14 subunits forms the central stalk rotor element with the F(1) delta and epsilon subunits. The polypeptide is ATP synthase subunit c, chloroplastic (Oltmannsiellopsis viridis (Marine flagellate)).